Consider the following 137-residue polypeptide: Large ribosomal subunit protein uL16 (137 aa).

The protein belongs to the universal ribosomal protein uL16 family. In terms of assembly, part of the 50S ribosomal subunit.

Binds 23S rRNA and is also seen to make contacts with the A and possibly P site tRNAs. The sequence is that of Large ribosomal subunit protein uL16 from Mycoplasma mycoides subsp. mycoides SC (strain CCUG 32753 / NCTC 10114 / PG1).